The sequence spans 271 residues: 3-methyl-2-oxobutanoate hydroxymethyltransferase (271 aa).

Aspartate 53 and aspartate 92 together coordinate Mg(2+). 3-methyl-2-oxobutanoate contacts are provided by residues 53–54, aspartate 92, and lysine 120; that span reads DS. Glutamate 122 lines the Mg(2+) pocket. The active-site Proton acceptor is glutamate 189.

This sequence belongs to the PanB family. Homodecamer; pentamer of dimers. Requires Mg(2+) as cofactor.

Its subcellular location is the cytoplasm. The catalysed reaction is 3-methyl-2-oxobutanoate + (6R)-5,10-methylene-5,6,7,8-tetrahydrofolate + H2O = 2-dehydropantoate + (6S)-5,6,7,8-tetrahydrofolate. The protein operates within cofactor biosynthesis; (R)-pantothenate biosynthesis; (R)-pantoate from 3-methyl-2-oxobutanoate: step 1/2. Functionally, catalyzes the reversible reaction in which hydroxymethyl group from 5,10-methylenetetrahydrofolate is transferred onto alpha-ketoisovalerate to form ketopantoate. This is 3-methyl-2-oxobutanoate hydroxymethyltransferase from Paraburkholderia phymatum (strain DSM 17167 / CIP 108236 / LMG 21445 / STM815) (Burkholderia phymatum).